The chain runs to 241 residues: Proteasome subunit alpha (241 aa).

It belongs to the peptidase T1A family. In terms of assembly, the 20S proteasome core is composed of 14 alpha and 14 beta subunits that assemble into four stacked heptameric rings, resulting in a barrel-shaped structure. The two inner rings, each composed of seven catalytic beta subunits, are sandwiched by two outer rings, each composed of seven alpha subunits. The catalytic chamber with the active sites is on the inside of the barrel. Has a gated structure, the ends of the cylinder being occluded by the N-termini of the alpha-subunits. Is capped at one or both ends by the proteasome regulatory ATPase, PAN.

Its subcellular location is the cytoplasm. With respect to regulation, the formation of the proteasomal ATPase PAN-20S proteasome complex, via the docking of the C-termini of PAN into the intersubunit pockets in the alpha-rings, triggers opening of the gate for substrate entry. Interconversion between the open-gate and close-gate conformations leads to a dynamic regulation of the 20S proteasome proteolysis activity. Functionally, component of the proteasome core, a large protease complex with broad specificity involved in protein degradation. The sequence is that of Proteasome subunit alpha from Saccharolobus solfataricus (strain ATCC 35092 / DSM 1617 / JCM 11322 / P2) (Sulfolobus solfataricus).